A 262-amino-acid polypeptide reads, in one-letter code: G patch domain-containing protein 11 (262 aa).

3 stretches are compositionally biased toward basic and acidic residues: residues 39–61, 114–127, and 136–165; these read LHKE…ESRE, EEVK…ELQN, and QHLE…DLRK. Disordered stretches follow at residues 39-71 and 88-169; these read LHKE…IGSQ and GLGK…SQRA. Residues 41 to 62 are a coiled coil; the sequence is KEKDIQNRQKSFKEQEKESREA. Positions 70 to 116 constitute a G-patch domain; sequence SQNKGFALLQKMGYKAGQGLGKEGAGRVEPVPLNIKTDRGGIGMEEV.

This sequence belongs to the GPATCH11 family.

It localises to the chromosome. Its subcellular location is the centromere. It is found in the kinetochore. In Danio rerio (Zebrafish), this protein is G patch domain-containing protein 11 (gpatch11).